Consider the following 258-residue polypeptide: 1-(5-phosphoribosyl)-5-[(5-phosphoribosylamino)methylideneamino] imidazole-4-carboxamide isomerase (258 aa).

Asp-17 acts as the Proton acceptor in catalysis. The active-site Proton donor is Asp-136.

This sequence belongs to the HisA/HisF family.

It localises to the cytoplasm. It catalyses the reaction 1-(5-phospho-beta-D-ribosyl)-5-[(5-phospho-beta-D-ribosylamino)methylideneamino]imidazole-4-carboxamide = 5-[(5-phospho-1-deoxy-D-ribulos-1-ylimino)methylamino]-1-(5-phospho-beta-D-ribosyl)imidazole-4-carboxamide. Its pathway is amino-acid biosynthesis; L-histidine biosynthesis; L-histidine from 5-phospho-alpha-D-ribose 1-diphosphate: step 4/9. The protein is 1-(5-phosphoribosyl)-5-[(5-phosphoribosylamino)methylideneamino] imidazole-4-carboxamide isomerase of Corynebacterium jeikeium (strain K411).